The following is a 110-amino-acid chain: Small ribosomal subunit protein bS16 (110 aa).

Residues Lys84–Ser110 form a disordered region. Residues Asn90–Gln103 show a composition bias toward basic and acidic residues.

The protein belongs to the bacterial ribosomal protein bS16 family.

This chain is Small ribosomal subunit protein bS16, found in Nitrobacter hamburgensis (strain DSM 10229 / NCIMB 13809 / X14).